A 256-amino-acid chain; its full sequence is Hydroxyacylglutathione hydrolase (256 aa).

Zn(2+)-binding residues include His57, His59, Asp61, His62, His115, Asp134, and His172.

This sequence belongs to the metallo-beta-lactamase superfamily. Glyoxalase II family. In terms of assembly, monomer. Requires Zn(2+) as cofactor.

The catalysed reaction is an S-(2-hydroxyacyl)glutathione + H2O = a 2-hydroxy carboxylate + glutathione + H(+). It functions in the pathway secondary metabolite metabolism; methylglyoxal degradation; (R)-lactate from methylglyoxal: step 2/2. Its function is as follows. Thiolesterase that catalyzes the hydrolysis of S-D-lactoyl-glutathione to form glutathione and D-lactic acid. In Rhizobium johnstonii (strain DSM 114642 / LMG 32736 / 3841) (Rhizobium leguminosarum bv. viciae), this protein is Hydroxyacylglutathione hydrolase.